The primary structure comprises 401 residues: Phosphoglycerate kinase (401 aa).

Substrate-binding positions include 21 to 23, arginine 36, 59 to 62, arginine 116, and arginine 156; these read DLN and HQGR. ATP-binding positions include glutamate 331 and 357-360; that span reads GGDT.

It belongs to the phosphoglycerate kinase family.

The protein localises to the cytoplasm. The catalysed reaction is (2R)-3-phosphoglycerate + ATP = (2R)-3-phospho-glyceroyl phosphate + ADP. It functions in the pathway carbohydrate degradation; glycolysis; pyruvate from D-glyceraldehyde 3-phosphate: step 2/5. This chain is Phosphoglycerate kinase (pgk), found in Haloarcula vallismortis (Halobacterium vallismortis).